Reading from the N-terminus, the 359-residue chain is DNA replication and repair protein RecF (359 aa).

ATP is bound at residue 30 to 37 (GPNGSGKT).

It belongs to the RecF family.

The protein resides in the cytoplasm. In terms of biological role, the RecF protein is involved in DNA metabolism; it is required for DNA replication and normal SOS inducibility. RecF binds preferentially to single-stranded, linear DNA. It also seems to bind ATP. This Vibrio vulnificus (strain CMCP6) protein is DNA replication and repair protein RecF.